The following is a 602-amino-acid chain: NADH-quinone oxidoreductase subunit C/D (602 aa).

The tract at residues 1 to 192 (MVNNMTDLTA…DPFELTKAKQ (192 aa)) is NADH dehydrogenase I subunit C. Residues 216 to 602 (DFMFLNLGPN…IDFVMSDVDR (387 aa)) form an NADH dehydrogenase I subunit D region.

In the N-terminal section; belongs to the complex I 30 kDa subunit family. The protein in the C-terminal section; belongs to the complex I 49 kDa subunit family. NDH-1 is composed of 13 different subunits. Subunits NuoB, CD, E, F, and G constitute the peripheral sector of the complex.

The protein resides in the cell inner membrane. The catalysed reaction is a quinone + NADH + 5 H(+)(in) = a quinol + NAD(+) + 4 H(+)(out). NDH-1 shuttles electrons from NADH, via FMN and iron-sulfur (Fe-S) centers, to quinones in the respiratory chain. The immediate electron acceptor for the enzyme in this species is believed to be ubiquinone. Couples the redox reaction to proton translocation (for every two electrons transferred, four hydrogen ions are translocated across the cytoplasmic membrane), and thus conserves the redox energy in a proton gradient. The polypeptide is NADH-quinone oxidoreductase subunit C/D (Klebsiella pneumoniae subsp. pneumoniae (strain ATCC 700721 / MGH 78578)).